We begin with the raw amino-acid sequence, 126 residues long: Protein Wnt-1 (126 aa).

Ser1 carries O-palmitoleoyl serine; by PORCN lipidation. Cys92 and Cys107 are joined by a disulfide. N-linked (GlcNAc...) asparagine glycans are attached at residues Asn93 and Asn123.

It belongs to the Wnt family. Palmitoleoylation is required for efficient binding to frizzled receptors. Palmitoleoylation is necessary for proper trafficking to cell surface. Depalmitoleoylated by NOTUM, leading to inhibit Wnt signaling pathway.

It is found in the secreted. The protein localises to the extracellular space. The protein resides in the extracellular matrix. In terms of biological role, ligand for members of the frizzled family of seven transmembrane receptors. Acts in the canonical Wnt signaling pathway by promoting beta-catenin-dependent transcriptional activation. Plays an essential role in the development of the embryonic brain and central nervous system (CNS). Has a role in osteoblast function, bone development and bone homeostasis. This Pituophis melanoleucus (Pine snake) protein is Protein Wnt-1 (WNT-1).